Here is a 473-residue protein sequence, read N- to C-terminus: Lactate utilization protein B 2 (473 aa).

2 4Fe-4S ferredoxin-type domains span residues 302 to 332 (GSEF…GHSY) and 351 to 380 (YDDY…LHDL). Cys311, Cys314, Cys317, Cys321, Cys364, Cys367, and Cys371 together coordinate [4Fe-4S] cluster.

This sequence belongs to the LutB/YkgF family.

In terms of biological role, is involved in L-lactate degradation and allows cells to grow with lactate as the sole carbon source. Has probably a role as an electron transporter during oxidation of L-lactate. The sequence is that of Lactate utilization protein B 2 from Bacillus mycoides (strain KBAB4) (Bacillus weihenstephanensis).